Consider the following 277-residue polypeptide: MNIKHNYISYFQMNGIQIPGISNPEAIIPITGEKKSYKLVLDFNDGAISIIEARYLDSKLHREIQDLSDNDVTILGTEISDGAYDENLDIHCDKCNKFYRPYCRLHPLFKIPDRVLKRDESSNLSFSQQTLPILFRIEESKLPNAGLGVIAEVFIPVGMVFGPYKGRRCQKKTDFYKDGYAWLIKSGDKRFYIDGSDAERSNWLRYINSPRFEDEQNMLAFQTNGKIFYRVIKPIRINQELLVWYGSSYGNEFVESENGNKYKKPAKNPFICVGAQR.

One can recognise an SET domain in the interval 135–246 (FRIEESKLPN…INQELLVWYG (112 aa)). Y245 is an S-adenosyl-L-methionine binding site.

It belongs to the class V-like SAM-binding methyltransferase superfamily. Expressed in the germline. Predominantly expressed in primary spermatocytes. Also expressed in the oocyte-producing germline of hermaphrodites.

The protein resides in the nucleus. It carries out the reaction N(6)-methyl-L-lysyl(4)-[histone H3] + S-adenosyl-L-methionine = N(6),N(6)-dimethyl-L-lysyl(4)-[histone H3] + S-adenosyl-L-homocysteine + H(+). It catalyses the reaction L-lysyl(4)-[histone H3] + S-adenosyl-L-methionine = N(6)-methyl-L-lysyl(4)-[histone H3] + S-adenosyl-L-homocysteine + H(+). In terms of biological role, histone methyltransferase that specifically mono- and di-methylates 'Lys-4' of histone H3 in vitro. Does not tri-methylate 'Lys-4' of histone H3 in vitro. Promotes spermatid development and fertility by positively regulating the transcription of spermatocyte-specific genes in primary spermatocytes. Together with spr-5, required for transgenerational fertility. In Caenorhabditis elegans, this protein is Histone-lysine N-methyltransferase set-17.